A 407-amino-acid chain; its full sequence is Arginine deiminase (407 aa).

Cys397 (amidino-cysteine intermediate) is an active-site residue.

Belongs to the arginine deiminase family.

It is found in the cytoplasm. It catalyses the reaction L-arginine + H2O = L-citrulline + NH4(+). The protein operates within amino-acid degradation; L-arginine degradation via ADI pathway; carbamoyl phosphate from L-arginine: step 1/2. This is Arginine deiminase from Salmonella arizonae (strain ATCC BAA-731 / CDC346-86 / RSK2980).